The sequence spans 429 residues: Serine hydroxymethyltransferase (429 aa).

Residues L126 and 130–132 each bind (6S)-5,6,7,8-tetrahydrofolate; that span reads GHL. An N6-(pyridoxal phosphate)lysine modification is found at K235.

The protein belongs to the SHMT family. As to quaternary structure, homodimer. It depends on pyridoxal 5'-phosphate as a cofactor.

The protein resides in the cytoplasm. It catalyses the reaction (6R)-5,10-methylene-5,6,7,8-tetrahydrofolate + glycine + H2O = (6S)-5,6,7,8-tetrahydrofolate + L-serine. The protein operates within one-carbon metabolism; tetrahydrofolate interconversion. Its pathway is amino-acid biosynthesis; glycine biosynthesis; glycine from L-serine: step 1/1. Its function is as follows. Catalyzes the reversible interconversion of serine and glycine with tetrahydrofolate (THF) serving as the one-carbon carrier. This reaction serves as the major source of one-carbon groups required for the biosynthesis of purines, thymidylate, methionine, and other important biomolecules. Also exhibits THF-independent aldolase activity toward beta-hydroxyamino acids, producing glycine and aldehydes, via a retro-aldol mechanism. The chain is Serine hydroxymethyltransferase from Zymomonas mobilis subsp. mobilis (strain ATCC 31821 / ZM4 / CP4).